The following is a 305-amino-acid chain: Acetaldehyde dehydrogenase (305 aa).

The active-site Acyl-thioester intermediate is C130. Residues 161–169 and N272 contribute to the NAD(+) site; that span reads SVGPGTRKN.

Belongs to the acetaldehyde dehydrogenase family.

It catalyses the reaction acetaldehyde + NAD(+) + CoA = acetyl-CoA + NADH + H(+). The sequence is that of Acetaldehyde dehydrogenase from Leptothrix cholodnii (strain ATCC 51168 / LMG 8142 / SP-6) (Leptothrix discophora (strain SP-6)).